Consider the following 237-residue polypeptide: Eukaryotic translation initiation factor 3 subunit J (237 aa).

Residues 20–64 are disordered; sequence ANNINKWEGEDDDEDVKESWEDEEEKKDEEKPTKTEAPAKTKPNK. Over residues 28–46 the composition is skewed to acidic residues; the sequence is GEDDDEDVKESWEDEEEKK. The span at 47-58 shows a compositional bias: basic and acidic residues; it reads DEEKPTKTEAPA. Residues 63-115 are a coiled coil; it reads NKVLKAKLLEQECLEKEEEAKRLANMSTEEKLAEKLRLQKIQEESDLKSALET.

Belongs to the eIF-3 subunit J family. In terms of assembly, component of the eukaryotic translation initiation factor 3 (eIF-3) complex. The eIF-3 complex interacts with pix.

Its subcellular location is the cytoplasm. In terms of biological role, component of the eukaryotic translation initiation factor 3 (eIF-3) complex, which is involved in protein synthesis of a specialized repertoire of mRNAs and, together with other initiation factors, stimulates binding of mRNA and methionyl-tRNAi to the 40S ribosome. The eIF-3 complex specifically targets and initiates translation of a subset of mRNAs involved in cell proliferation. The sequence is that of Eukaryotic translation initiation factor 3 subunit J from Drosophila grimshawi (Hawaiian fruit fly).